Consider the following 200-residue polypeptide: NAD(P)H dehydrogenase (quinone) (200 aa).

The Flavodoxin-like domain maps to 4-191 (ILVLYHSLWG…TIARFQGRHV (188 aa)). Residues 10 to 15 (SLWGHV) and 79 to 81 (TRF) contribute to the FMN site. Residue tryptophan 12 participates in NAD(+) binding. Tryptophan 99 is a substrate binding site. Residues 114 to 120 (STATQHG) and histidine 135 contribute to the FMN site.

This sequence belongs to the WrbA family. FMN is required as a cofactor.

It carries out the reaction a quinone + NADH + H(+) = a quinol + NAD(+). It catalyses the reaction a quinone + NADPH + H(+) = a quinol + NADP(+). This Acidithiobacillus ferrooxidans (strain ATCC 53993 / BNL-5-31) (Leptospirillum ferrooxidans (ATCC 53993)) protein is NAD(P)H dehydrogenase (quinone).